The primary structure comprises 131 residues: Ribosome-binding factor A (131 aa).

It belongs to the RbfA family. In terms of assembly, monomer. Binds 30S ribosomal subunits, but not 50S ribosomal subunits or 70S ribosomes.

Its subcellular location is the cytoplasm. Functionally, one of several proteins that assist in the late maturation steps of the functional core of the 30S ribosomal subunit. Associates with free 30S ribosomal subunits (but not with 30S subunits that are part of 70S ribosomes or polysomes). Required for efficient processing of 16S rRNA. May interact with the 5'-terminal helix region of 16S rRNA. The sequence is that of Ribosome-binding factor A from Thermotoga maritima (strain ATCC 43589 / DSM 3109 / JCM 10099 / NBRC 100826 / MSB8).